The chain runs to 119 residues: Hydrogenase maturation factor HypA (119 aa).

Residue H2 participates in Ni(2+) binding. Residues C73, C76, C89, and C92 each coordinate Zn(2+).

It belongs to the HypA/HybF family.

In terms of biological role, involved in the maturation of [NiFe] hydrogenases. Required for nickel insertion into the metal center of the hydrogenase. The sequence is that of Hydrogenase maturation factor HypA from Dehalococcoides mccartyi (strain CBDB1).